Consider the following 317-residue polypeptide: MIEIEMEKPKVEVVEINAENTYGKFTVEPLERGYGTTLGNSLRRIMLSSLPGAAVTSVKIDGVLHEFSTIPGVKEDVAEIIINLKGLSIRMHGNEPKTVRIEAKGEGVITAGDIIADADVEILSPDTHIATLDTDAVLNMELTIAKGRGYVPAENNKTPGMPIGVLPIDSIFTPVTKVSYHVENTRVGQVTDYDKLVIEVFTDGSIVPDEAISLAAKIMNEHLNLFITLTDHVNDVEIMVQKEEDKKEKVLEMTIEELDLSVRSYNCLKRAGINTVDELAQKSEEDMMKVRNLGRKSLEEVQKKLEELGLGLRPSDE.

The tract at residues 1-230 (MIEIEMEKPK…EHLNLFITLT (230 aa)) is alpha N-terminal domain (alpha-NTD). The tract at residues 247–317 (KEKVLEMTIE…LGLGLRPSDE (71 aa)) is alpha C-terminal domain (alpha-CTD).

This sequence belongs to the RNA polymerase alpha chain family. As to quaternary structure, homodimer. The RNAP catalytic core consists of 2 alpha, 1 beta, 1 beta' and 1 omega subunit. When a sigma factor is associated with the core the holoenzyme is formed, which can initiate transcription.

The enzyme catalyses RNA(n) + a ribonucleoside 5'-triphosphate = RNA(n+1) + diphosphate. In terms of biological role, DNA-dependent RNA polymerase catalyzes the transcription of DNA into RNA using the four ribonucleoside triphosphates as substrates. This chain is DNA-directed RNA polymerase subunit alpha, found in Alkaliphilus oremlandii (strain OhILAs) (Clostridium oremlandii (strain OhILAs)).